The sequence spans 124 residues: S-adenosylmethionine decarboxylase proenzyme (124 aa).

Residue Ser63 is the Schiff-base intermediate with substrate; via pyruvic acid of the active site. A Pyruvic acid (Ser); by autocatalysis modification is found at Ser63. His68 acts as the Proton acceptor; for processing activity in catalysis. Cys83 serves as the catalytic Proton donor; for catalytic activity.

It belongs to the prokaryotic AdoMetDC family. Type 1 subfamily. In terms of assembly, heterotetramer of two alpha and two beta chains arranged as a dimer of alpha/beta heterodimers. The cofactor is pyruvate. Post-translationally, is synthesized initially as an inactive proenzyme. Formation of the active enzyme involves a self-maturation process in which the active site pyruvoyl group is generated from an internal serine residue via an autocatalytic post-translational modification. Two non-identical subunits are generated from the proenzyme in this reaction, and the pyruvate is formed at the N-terminus of the alpha chain, which is derived from the carboxyl end of the proenzyme. The post-translation cleavage follows an unusual pathway, termed non-hydrolytic serinolysis, in which the side chain hydroxyl group of the serine supplies its oxygen atom to form the C-terminus of the beta chain, while the remainder of the serine residue undergoes an oxidative deamination to produce ammonia and the pyruvoyl group blocking the N-terminus of the alpha chain.

It carries out the reaction S-adenosyl-L-methionine + H(+) = S-adenosyl 3-(methylsulfanyl)propylamine + CO2. Its pathway is amine and polyamine biosynthesis; S-adenosylmethioninamine biosynthesis; S-adenosylmethioninamine from S-adenosyl-L-methionine: step 1/1. Its function is as follows. Catalyzes the decarboxylation of S-adenosylmethionine to S-adenosylmethioninamine (dcAdoMet), the propylamine donor required for the synthesis of the polyamines spermine and spermidine from the diamine putrescine. The protein is S-adenosylmethionine decarboxylase proenzyme of Caldicellulosiruptor bescii (strain ATCC BAA-1888 / DSM 6725 / KCTC 15123 / Z-1320) (Anaerocellum thermophilum).